A 239-amino-acid polypeptide reads, in one-letter code: Fatty acid metabolism regulator protein (239 aa).

An HTH gntR-type domain is found at 6–74 (QSPAGFAEEY…HGKPTKVNNF (69 aa)). Residues 34 to 53 (ERELSELIGVTRTTLREVLQ) constitute a DNA-binding region (H-T-H motif).

In terms of assembly, homodimer.

It is found in the cytoplasm. Multifunctional regulator of fatty acid metabolism. The sequence is that of Fatty acid metabolism regulator protein from Escherichia fergusonii (strain ATCC 35469 / DSM 13698 / CCUG 18766 / IAM 14443 / JCM 21226 / LMG 7866 / NBRC 102419 / NCTC 12128 / CDC 0568-73).